A 93-amino-acid polypeptide reads, in one-letter code: CRISPR-associated endoribonuclease Cas2 3 (93 aa).

Aspartate 10 serves as a coordination point for Mg(2+).

Belongs to the CRISPR-associated endoribonuclease Cas2 protein family. As to quaternary structure, homodimer, forms a heterotetramer with a Cas1 homodimer. Mg(2+) serves as cofactor.

Its function is as follows. CRISPR (clustered regularly interspaced short palindromic repeat), is an adaptive immune system that provides protection against mobile genetic elements (viruses, transposable elements and conjugative plasmids). CRISPR clusters contain sequences complementary to antecedent mobile elements and target invading nucleic acids. CRISPR clusters are transcribed and processed into CRISPR RNA (crRNA). Functions as a ssRNA-specific endoribonuclease. Involved in the integration of spacer DNA into the CRISPR cassette. This is CRISPR-associated endoribonuclease Cas2 3 from Chloroflexus aurantiacus (strain ATCC 29366 / DSM 635 / J-10-fl).